A 398-amino-acid chain; its full sequence is MKQLTILGSTGSIGCSTLDVVRHNPEHFRVVALVAGKNVTRMVEQCLEFSPRYAVMDDEASAKLLKTMLQQQGSRTEVLSGQQAACDMAALEDVDQVMAAIVGAAGLLPTLAAIRAGKTILLANKESLVTCGRLFMDAVKQSKAQLLPVDSEHNAIFQSLPQPIQHNLGYADLEQNGVVSILLTGSGGPFRETPLRDLATMTPDQACRHPNWSMGRKISVDSATMMNKGLEYIEARWLFNASASQMEVLIHPQSVIHSMVRYQDGSVLAQLGEPDMRTPIAHTMAWPNRVNSGVKPLDFCKLSALTFAAPDYDRYPCLKLAMEAFEQGQAATTALNAANEITVAAFLAQQIRFTDIAALNLSVLEKMDMREPQCVDDVLSVDANAREVARKEVMRLAS.

8 residues coordinate NADPH: Thr-10, Gly-11, Ser-12, Ile-13, Gly-36, Lys-37, Asn-38, and Asn-124. Residue Lys-125 coordinates 1-deoxy-D-xylulose 5-phosphate. Glu-126 lines the NADPH pocket. Asp-150 contributes to the Mn(2+) binding site. Ser-151, Glu-152, Ser-186, and His-209 together coordinate 1-deoxy-D-xylulose 5-phosphate. Glu-152 lines the Mn(2+) pocket. Residue Gly-215 coordinates NADPH. 4 residues coordinate 1-deoxy-D-xylulose 5-phosphate: Ser-222, Asn-227, Lys-228, and Glu-231. Glu-231 is a Mn(2+) binding site.

This sequence belongs to the DXR family. Homodimer. It depends on Mg(2+) as a cofactor. Mn(2+) is required as a cofactor. Requires Co(2+) as cofactor.

It carries out the reaction 2-C-methyl-D-erythritol 4-phosphate + NADP(+) = 1-deoxy-D-xylulose 5-phosphate + NADPH + H(+). Its pathway is isoprenoid biosynthesis; isopentenyl diphosphate biosynthesis via DXP pathway; isopentenyl diphosphate from 1-deoxy-D-xylulose 5-phosphate: step 1/6. With respect to regulation, inhibited by fosmidomycin. Its function is as follows. Catalyzes the NADPH-dependent rearrangement and reduction of 1-deoxy-D-xylulose-5-phosphate (DXP) to 2-C-methyl-D-erythritol 4-phosphate (MEP). This is 1-deoxy-D-xylulose 5-phosphate reductoisomerase (dxr) from Escherichia coli (strain K12).